Reading from the N-terminus, the 129-residue chain is Small ribosomal subunit protein uS11 (129 aa).

The protein belongs to the universal ribosomal protein uS11 family. Part of the 30S ribosomal subunit. Interacts with proteins S7 and S18. Binds to IF-3.

Functionally, located on the platform of the 30S subunit, it bridges several disparate RNA helices of the 16S rRNA. Forms part of the Shine-Dalgarno cleft in the 70S ribosome. In Lactiplantibacillus plantarum (strain ATCC BAA-793 / NCIMB 8826 / WCFS1) (Lactobacillus plantarum), this protein is Small ribosomal subunit protein uS11.